The sequence spans 1364 residues: Pleckstrin homology domain-containing family H member 1 (1364 aa).

The stretch at 28-169 (FRLQASKIRE…VGSLQDALEA (142 aa)) forms a coiled coil. Disordered stretches follow at residues 184 to 266 (GAAE…SPPH), 296 to 321 (GTKT…PGTP), 356 to 395 (LHPS…ESPK), 487 to 529 (PFMD…IKRG), and 546 to 568 (DACS…SSYS). Residues 237-246 (EDSSSSTVHS) show a composition bias toward polar residues. The segment covering 364–379 (LESRARSREEPEKMEM) has biased composition (basic and acidic residues). Positions 509–520 (VPSSESRKTSGL) are enriched in polar residues. PH domains are found at residues 578–672 (SLEK…SLLK) and 687–796 (KPTV…VAAG). The residue at position 745 (serine 745) is a Phosphoserine. The MyTH4 domain maps to 832-986 (YSKDGLYASL…PSRMEVVSIL (155 aa)). Residues 997 to 1333 (FSIPVHFTNG…NHCTTTVNPP (337 aa)) form the FERM domain.

The polypeptide is Pleckstrin homology domain-containing family H member 1 (PLEKHH1) (Homo sapiens (Human)).